The sequence spans 419 residues: Glycine, glutamate and proline-rich protein (419 aa).

Residues 1–16 (MKCLVALFLSLSLVAC) form the signal peptide. The tract at residues 74–152 (VERESEEAEG…VDMCAGESRR (79 aa)) is disordered. The segment covering 76 to 85 (RESEEAEGEG) has biased composition (acidic residues). Residues 86 to 130 (TDGRGGGEGEREGWGGEREGGEGEREGGEGEREGREGEREGKSSE) are compositionally biased toward basic and acidic residues.

It in the C-terminal section; belongs to the glycosyl hydrolase 23 family. As to expression, component of the acid-insoluble organic matrix of calcified layers of the shell (at protein level).

The protein localises to the secreted. In Lottia gigantea (Giant owl limpet), this protein is Glycine, glutamate and proline-rich protein.